Consider the following 150-residue polypeptide: 16.9 kDa class I heat shock protein 1 (150 aa).

The tract at residues 1–42 (MSLVRRSNVFDPFSLDLWDPFDSVFRSVVPATSDNDTAAFAN) is important for thermostability under elevated temperature. The sHSP domain maps to 36–150 (DTAAFANARI…PEVKAIEISG (115 aa)).

This sequence belongs to the small heat shock protein (HSP20) family. As to quaternary structure, forms oligomeric structures.

It is found in the cytoplasm. The sequence is that of 16.9 kDa class I heat shock protein 1 (HSP16.9A) from Oryza sativa subsp. japonica (Rice).